The primary structure comprises 291 residues: Pyridoxal 5'-phosphate synthase subunit PdxS (291 aa).

Asp-23 serves as a coordination point for D-ribose 5-phosphate. Lys-80 serves as the catalytic Schiff-base intermediate with D-ribose 5-phosphate. Gly-152 lines the D-ribose 5-phosphate pocket. A D-glyceraldehyde 3-phosphate-binding site is contributed by Arg-164. Residues Gly-213 and 234–235 (GS) each bind D-ribose 5-phosphate.

It belongs to the PdxS/SNZ family. As to quaternary structure, in the presence of PdxT, forms a dodecamer of heterodimers.

It catalyses the reaction aldehydo-D-ribose 5-phosphate + D-glyceraldehyde 3-phosphate + L-glutamine = pyridoxal 5'-phosphate + L-glutamate + phosphate + 3 H2O + H(+). The protein operates within cofactor biosynthesis; pyridoxal 5'-phosphate biosynthesis. Catalyzes the formation of pyridoxal 5'-phosphate from ribose 5-phosphate (RBP), glyceraldehyde 3-phosphate (G3P) and ammonia. The ammonia is provided by the PdxT subunit. Can also use ribulose 5-phosphate and dihydroxyacetone phosphate as substrates, resulting from enzyme-catalyzed isomerization of RBP and G3P, respectively. The sequence is that of Pyridoxal 5'-phosphate synthase subunit PdxS from Bifidobacterium adolescentis (strain ATCC 15703 / DSM 20083 / NCTC 11814 / E194a).